The sequence spans 453 residues: Choline kinase alpha (453 aa).

Residues 22–81 (CGGNAAPTPGVGQQRDAAGELESKQLGGRTQPLALPPPPPPPLPLPPPPSPPLADEQPEP) form a disordered region. The span at 55 to 73 (ALPPPPPPPLPLPPPPSPP) shows a compositional bias: pro residues. A Phosphoserine modification is found at serine 71. Residues 113–119 (RGGLSNM), arginine 142, and 203–209 (QFIPSRR) contribute to the ATP site. Residue 115–117 (GLS) participates in phosphocholine binding. N6-acetyllysine is present on lysine 243. Serine 275 bears the Phosphoserine mark. Residues glutamine 304 and aspartate 326 each contribute to the ATP site.

The protein belongs to the choline/ethanolamine kinase family. In terms of assembly, homodimer. Heterodimer with CHKB. As to quaternary structure, monomer; acetylation by KAT5 promotes dissociation of the homodimer and monomerization. Post-translationally, phosphorylated at Ser-275 by AMPK in response to glucose deprivation, leading to localization to lipid droplets. In terms of processing, acetylated by KAT5 at Lys-243 following phosphorylation by AMPK, leading to monomerization and conversion into a tyrosine-protein kinase. As to expression, expressed ubiquitously with the highest level in testis.

It localises to the cytoplasm. The protein localises to the cytosol. Its subcellular location is the lipid droplet. The enzyme catalyses choline + ATP = phosphocholine + ADP + H(+). It catalyses the reaction ethanolamine + ATP = phosphoethanolamine + ADP + H(+). The catalysed reaction is L-tyrosyl-[protein] + ATP = O-phospho-L-tyrosyl-[protein] + ADP + H(+). The protein operates within phospholipid metabolism; phosphatidylcholine biosynthesis; phosphocholine from choline: step 1/1. It functions in the pathway phospholipid metabolism; phosphatidylethanolamine biosynthesis; phosphatidylethanolamine from ethanolamine: step 1/3. Plays a key role in phospholipid biosynthesis by catalyzing the phosphorylation of free choline to phosphocholine, the first step in phosphatidylcholine biosynthesis. Also phosphorylates ethanolamine, thereby contributing to phosphatidylethanolamine biosynthesis. Has higher activity with choline. Its function is as follows. This isoform plays a key role in lipolysis of lipid droplets following glucose deprivation. In response to glucose deprivation, phosphorylated by AMPK, promoting localization to lipid droplets. Phosphorylation is followed by acetylation by KAT5, leading to dissociation of the homodimer into a monomer. Monomeric CHKA isoform 1 is converted into a tyrosine-protein kinase, which phosphorylates lipid droplet structural proteins PLIN2 and PLIN3, leading to lipolysis of lipid droplets. In Mus musculus (Mouse), this protein is Choline kinase alpha (Chka).